We begin with the raw amino-acid sequence, 1096 residues long: Protein transport protein SEC24 B (1096 aa).

The tract at residues 1–315 (MAAPVPPGAY…SAPGTPGSIY (315 aa)) is disordered. Residues 12–23 (PNNNQQNSGGPP) are compositionally biased toward low complexity. The segment covering 27–45 (PGSQGNPNSLAANMQNLNI) has biased composition (polar residues). Residues 47 to 64 (RPPPPMPGSGPRPSPPFG) show a composition bias toward pro residues. A compositionally biased stretch (low complexity) spans 65–78 (QSPQSFPQQQQQQP). Positions 79–92 (RPSPMARPGPPPPA) are enriched in pro residues. A compositionally biased stretch (low complexity) spans 93 to 107 (AMARPGGPPQVSQPG). Over residues 108–122 (GFPPVGRPVAPPSNQ) the composition is skewed to pro residues. Residues 140–149 (SFPQPGGFPA) show a composition bias toward low complexity. Pro residues-rich tracts occupy residues 150–160 (SGPPGGVPSGP), 171–186 (SPPP…PPSG), 246–258 (MAPP…PPNA), and 287–303 (GRPP…PPQQ). The Zn(2+) site is built by Cys-433, Cys-436, Cys-455, and Cys-458. The interval 433–458 (CSRCKGYVNPFMKFIDQGRKFICNLC) is zinc finger-like.

The protein belongs to the SEC23/SEC24 family. SEC24 subfamily. As to quaternary structure, component of the coat protein complex II (COPII), composed of at least five proteins: the Sec23/24 complex, the Sec13/31 complex and Sar1. As to expression, mainly expressed in pollen, roots, stems, petioles and hypocotyls, and, to a lower extent, in leaves and cotyledons.

It localises to the cytoplasmic vesicle. The protein localises to the COPII-coated vesicle membrane. The protein resides in the endoplasmic reticulum membrane. Its subcellular location is the golgi apparatus membrane. Component of the coat protein complex II (COPII), that covers ER-derived vesicles involved in transport from the endoplasmic reticulum to the Golgi apparatus. COPII is composed of at least five proteins: the SEC23/24 complex, the SEC13/31 complex, and the protein SAR1. Acts in the cytoplasm to promote the transport of secretory, plasma membrane, and vacuolar proteins from the endoplasmic reticulum to the Golgi complex. This is Protein transport protein SEC24 B from Arabidopsis thaliana (Mouse-ear cress).